A 123-amino-acid polypeptide reads, in one-letter code: MATINQLVRKPRKRKVQKSDVPALQACPQRRGVCTRVYTTTPKKPNSALRKVCRVRLTNGFEVTSYIGGEGHNLQEHSVVLIRGGRVKDLPGVRYHTVRGSLDTSGVSDRKQGRSKYGTKRPK.

Asp-89 is subject to 3-methylthioaspartic acid. The interval 100–123 is disordered; sequence GSLDTSGVSDRKQGRSKYGTKRPK. A compositionally biased stretch (basic residues) spans 113 to 123; the sequence is GRSKYGTKRPK.

This sequence belongs to the universal ribosomal protein uS12 family. As to quaternary structure, part of the 30S ribosomal subunit. Contacts proteins S8 and S17. May interact with IF1 in the 30S initiation complex.

Functionally, with S4 and S5 plays an important role in translational accuracy. In terms of biological role, interacts with and stabilizes bases of the 16S rRNA that are involved in tRNA selection in the A site and with the mRNA backbone. Located at the interface of the 30S and 50S subunits, it traverses the body of the 30S subunit contacting proteins on the other side and probably holding the rRNA structure together. The combined cluster of proteins S8, S12 and S17 appears to hold together the shoulder and platform of the 30S subunit. The sequence is that of Small ribosomal subunit protein uS12 from Saccharophagus degradans (strain 2-40 / ATCC 43961 / DSM 17024).